Consider the following 938-residue polypeptide: Isoleucine--tRNA ligase (938 aa).

The 'HIGH' region motif lies at 58–68 (PYANGSIHIGH). Lys183 carries the post-translational modification N6-acetyllysine. Residue Glu561 participates in L-isoleucyl-5'-AMP binding. The 'KMSKS' region motif lies at 602–606 (KMSKS). Residue Lys605 participates in ATP binding. Residues Cys901, Cys904, Cys921, and Cys924 each contribute to the Zn(2+) site.

This sequence belongs to the class-I aminoacyl-tRNA synthetase family. IleS type 1 subfamily. As to quaternary structure, monomer. The cofactor is Zn(2+).

The protein localises to the cytoplasm. The catalysed reaction is tRNA(Ile) + L-isoleucine + ATP = L-isoleucyl-tRNA(Ile) + AMP + diphosphate. Catalyzes the attachment of isoleucine to tRNA(Ile). As IleRS can inadvertently accommodate and process structurally similar amino acids such as valine, to avoid such errors it has two additional distinct tRNA(Ile)-dependent editing activities. One activity is designated as 'pretransfer' editing and involves the hydrolysis of activated Val-AMP. The other activity is designated 'posttransfer' editing and involves deacylation of mischarged Val-tRNA(Ile). In Escherichia coli O17:K52:H18 (strain UMN026 / ExPEC), this protein is Isoleucine--tRNA ligase.